The primary structure comprises 154 residues: Isotocin-neurophysin IT 1 (154 aa).

Positions 1–20 are cleaved as a signal peptide; sequence MSGSMFSVFSLLYLLSVCSA. Residues cysteine 21 and cysteine 26 are joined by a disulfide bond. Glycine 29 is modified (glycine amide). Intrachain disulfides connect cysteine 42–cysteine 86, cysteine 45–cysteine 59, cysteine 53–cysteine 76, cysteine 60–cysteine 66, cysteine 93–cysteine 105, cysteine 99–cysteine 117, and cysteine 106–cysteine 111.

Belongs to the vasopressin/oxytocin family.

Functionally, isotocin causes contraction of smooth muscles. The sequence is that of Isotocin-neurophysin IT 1 from Catostomus commersonii (White sucker).